Reading from the N-terminus, the 127-residue chain is Fluoride-specific ion channel FluC (127 aa).

Transmembrane regions (helical) follow at residues 4 to 24, 35 to 55, 71 to 91, and 101 to 121; these read LLCAVFIGGGTGSVLRWWLGM, IGTLTANLVGAFVIGAGLAWF, TGFCGGLTTFSTFSAEVVFLL, and LNVMVNLLGSFAMTAVAFWLF. Na(+)-binding residues include G75 and T78.

Belongs to the fluoride channel Fluc/FEX (TC 1.A.43) family.

It localises to the cell inner membrane. The enzyme catalyses fluoride(in) = fluoride(out). Na(+) is not transported, but it plays an essential structural role and its presence is essential for fluoride channel function. Functionally, fluoride-specific ion channel. Important for reducing fluoride concentration in the cell, thus reducing its toxicity. In Klebsiella pneumoniae (strain 342), this protein is Fluoride-specific ion channel FluC.